We begin with the raw amino-acid sequence, 459 residues long: UDP-N-acetylmuramate--L-alanine ligase (459 aa).

Residue 113-119 participates in ATP binding; that stretch reads GSHGKTS.

This sequence belongs to the MurCDEF family.

The protein resides in the cytoplasm. The enzyme catalyses UDP-N-acetyl-alpha-D-muramate + L-alanine + ATP = UDP-N-acetyl-alpha-D-muramoyl-L-alanine + ADP + phosphate + H(+). The protein operates within cell wall biogenesis; peptidoglycan biosynthesis. Functionally, cell wall formation. In Desulfotalea psychrophila (strain LSv54 / DSM 12343), this protein is UDP-N-acetylmuramate--L-alanine ligase.